The sequence spans 2104 residues: 5'-3' DNA helicase ZGRF1 (2104 aa).

Residues 335–345 show a composition bias toward polar residues; that stretch reads SSPIHSSTVDG. Positions 335-359 are disordered; sequence SSPIHSSTVDGNDTERKPKAQEDDV. Ser336 is subject to Phosphoserine. A compositionally biased stretch (basic and acidic residues) spans 347–356; sequence DTERKPKAQE. 2 positions are modified to phosphoserine: Ser793 and Ser864. Zn(2+) is bound by residues Cys1349, His1351, Cys1374, and Cys1382. Residues 1349-1391 form a GRF-type zinc finger; that stretch reads CHHSQPAKLVMVKKEGPNKGRLFYTCDGPKADRCKFFKWLEDV. Residues 2085-2104 form a disordered region; the sequence is VEEKQKKKSEKEKSKDKSHS.

As to quaternary structure, interacts with DNA repair protein RAD51; the interaction promotes RAD51 strand exchange activity. Also interacts with DNA repair proteins EXO1 and BRCA1; the interactions are increased following DNA damage induction.

It localises to the nucleus. It catalyses the reaction ATP + H2O = ADP + phosphate + H(+). It carries out the reaction Couples ATP hydrolysis with the unwinding of duplex DNA at the replication fork by translocating in the 5'-3' direction. This creates two antiparallel DNA single strands (ssDNA). The leading ssDNA polymer is the template for DNA polymerase III holoenzyme which synthesizes a continuous strand.. 5'-3' DNA helicase which is recruited to sites of DNA damage and promotes repair of replication-blocking DNA lesions through stimulation of homologous recombination (HR). Promotes HR by directly stimulating RAD51-mediated strand exchange activity. Not required to load RAD51 at sites of DNA damage but promotes recombinational repair after RAD51 recruitment. Also promotes HR by positively regulating EXO1-mediated DNA end resection of double-strand breaks. Required for recruitment of replication protein RPA2 to DNA damage sites. Promotes the initiation of the G2/M checkpoint but not its maintenance. Catalyzes Holliday junction branch migration and dissociation of D-loops and DNA flaps. The chain is 5'-3' DNA helicase ZGRF1 (ZGRF1) from Homo sapiens (Human).